The primary structure comprises 163 residues: Lipoprotein signal peptidase (163 aa).

3 helical membrane passes run 8-28 (FFLL…YWVM), 61-81 (FSHW…LWLW), and 93-113 (FGFT…ICFY). Residues Asp117 and Asp136 contribute to the active site. Residues 128–148 (YFAVFNLADTFITLGVIAIII) form a helical membrane-spanning segment.

The protein belongs to the peptidase A8 family.

The protein resides in the cell inner membrane. The catalysed reaction is Release of signal peptides from bacterial membrane prolipoproteins. Hydrolyzes -Xaa-Yaa-Zaa-|-(S,diacylglyceryl)Cys-, in which Xaa is hydrophobic (preferably Leu), and Yaa (Ala or Ser) and Zaa (Gly or Ala) have small, neutral side chains.. The protein operates within protein modification; lipoprotein biosynthesis (signal peptide cleavage). This protein specifically catalyzes the removal of signal peptides from prolipoproteins. The protein is Lipoprotein signal peptidase of Bartonella henselae (strain ATCC 49882 / DSM 28221 / CCUG 30454 / Houston 1) (Rochalimaea henselae).